The primary structure comprises 277 residues: NADPH-dependent 7-cyano-7-deazaguanine reductase (277 aa).

86-88 (IES) contributes to the substrate binding site. An NADPH-binding site is contributed by 88–89 (SK). The active-site Thioimide intermediate is the Cys-184. Asp-191 acts as the Proton donor in catalysis. Residue 223-224 (HE) participates in substrate binding. 252 to 253 (RG) lines the NADPH pocket.

This sequence belongs to the GTP cyclohydrolase I family. QueF type 2 subfamily. As to quaternary structure, homodimer.

It localises to the cytoplasm. It catalyses the reaction 7-aminomethyl-7-carbaguanine + 2 NADP(+) = 7-cyano-7-deazaguanine + 2 NADPH + 3 H(+). Its pathway is tRNA modification; tRNA-queuosine biosynthesis. Functionally, catalyzes the NADPH-dependent reduction of 7-cyano-7-deazaguanine (preQ0) to 7-aminomethyl-7-deazaguanine (preQ1). The chain is NADPH-dependent 7-cyano-7-deazaguanine reductase from Chromohalobacter salexigens (strain ATCC BAA-138 / DSM 3043 / CIP 106854 / NCIMB 13768 / 1H11).